Consider the following 124-residue polypeptide: Urease subunit beta (124 aa).

This sequence belongs to the urease beta subunit family. As to quaternary structure, heterotrimer of UreA (gamma), UreB (beta) and UreC (alpha) subunits. Three heterotrimers associate to form the active enzyme.

It localises to the cytoplasm. The enzyme catalyses urea + 2 H2O + H(+) = hydrogencarbonate + 2 NH4(+). It functions in the pathway nitrogen metabolism; urea degradation; CO(2) and NH(3) from urea (urease route): step 1/1. This is Urease subunit beta from Bacillus velezensis (strain DSM 23117 / BGSC 10A6 / LMG 26770 / FZB42) (Bacillus amyloliquefaciens subsp. plantarum).